Consider the following 324-residue polypeptide: tRNA pseudouridine synthase B (324 aa).

Residue Asp-49 is the Nucleophile of the active site.

Belongs to the pseudouridine synthase TruB family. Type 1 subfamily.

It catalyses the reaction uridine(55) in tRNA = pseudouridine(55) in tRNA. Its function is as follows. Responsible for synthesis of pseudouridine from uracil-55 in the psi GC loop of transfer RNAs. This chain is tRNA pseudouridine synthase B, found in Tolumonas auensis (strain DSM 9187 / NBRC 110442 / TA 4).